A 406-amino-acid polypeptide reads, in one-letter code: Arginine deiminase (406 aa).

C396 (amidino-cysteine intermediate) is an active-site residue.

This sequence belongs to the arginine deiminase family.

Its subcellular location is the cytoplasm. The enzyme catalyses L-arginine + H2O = L-citrulline + NH4(+). The protein operates within amino-acid degradation; L-arginine degradation via ADI pathway; carbamoyl phosphate from L-arginine: step 1/2. The protein is Arginine deiminase of Vibrio campbellii (strain ATCC BAA-1116).